Reading from the N-terminus, the 245-residue chain is Dehydrogenase/reductase SDR family member 6 (245 aa).

NAD(+) is bound by residues 16–18 (QGI), Asp37, and Asp58. Residue Arg144 participates in substrate binding. The active-site Proton acceptor is the Tyr147. NAD(+)-binding positions include Lys151 and 180 to 184 (VDTPS). Positions 188 and 205 each coordinate substrate.

The protein belongs to the short-chain dehydrogenases/reductases (SDR) family. In terms of assembly, homotetramer.

Its subcellular location is the cytoplasm. The catalysed reaction is cis-4-hydroxy-L-proline + NAD(+) = 4-oxo-L-proline + NADH + H(+). The enzyme catalyses (R)-3-hydroxybutanoate + NAD(+) = acetoacetate + NADH + H(+). It functions in the pathway amino-acid metabolism. It participates in siderophore biosynthesis. NAD(H)-dependent dehydrogenase/reductase with a preference for cyclic substrates. Catalyzes stereoselective conversion of 4-oxo-L-proline to cis-4-hydroxy-L-proline, likely a detoxification mechanism for ketoprolines. Mediates the formation of 2,5-dihydroxybenzoate (2,5-DHBA), a siderophore that chelates free cytoplasmic iron, thereby regulating iron transport and homeostasis while protecting cells against free radical-induced oxidative stress. The iron-siderophore complex is imported into mitochondria, providing an iron source for mitochondrial metabolic processes in particular heme synthesis. May act as a 3-hydroxybutyrate dehydrogenase. The sequence is that of Dehydrogenase/reductase SDR family member 6 (bdh2) from Xenopus laevis (African clawed frog).